A 789-amino-acid chain; its full sequence is Probable phosphoketolase (789 aa).

It belongs to the XFP family. Thiamine diphosphate is required as a cofactor.

In Brucella abortus (strain 2308), this protein is Probable phosphoketolase.